A 294-amino-acid chain; its full sequence is MAGMKEIRGKIKSVQNTRKITKAMEMVAASKMRRAQERMRAARPYADKVRDIAAHMSRANPEYRHPFMVSNEGAKTAGIILVTTDKGLCGGMNTNVLRASLQKFKELEGQGKTIEATAIGTKGLGFLNRLRAKVVSNVVHLGDTPHLEKLIGAVKVQLDLYSEGKVSAVYLAYTRFVNTMKQEPVIEQLLPLSADQFERKEEDGTTPSTQWDYIYEPDAQAVVDELLVRYVEALVYQAVAENMASEQSARMVAMKAASDNAKTVINELQLVYNKSRQAAITKELSEIVGGAAAV.

It belongs to the ATPase gamma chain family. F-type ATPases have 2 components, CF(1) - the catalytic core - and CF(0) - the membrane proton channel. CF(1) has five subunits: alpha(3), beta(3), gamma(1), delta(1), epsilon(1). CF(0) has three main subunits: a, b and c.

It is found in the cell inner membrane. In terms of biological role, produces ATP from ADP in the presence of a proton gradient across the membrane. The gamma chain is believed to be important in regulating ATPase activity and the flow of protons through the CF(0) complex. In Paraburkholderia xenovorans (strain LB400), this protein is ATP synthase gamma chain.